The primary structure comprises 449 residues: Endoglucanase A (449 aa).

Positions 1-31 (MSTRRTAAALLAAAAVAVGGLTALTTTAAQA) form a signal peptide, tat-type signal. Positions 32-137 (APGCRVDYAV…SLNGTTCTGT (106 aa)) constitute a CBM2 domain. A disulfide bond links Cys-35 and Cys-134. The disordered stretch occupies residues 127 to 170 (FSLNGTTCTGTVPTTSPTPTPTPTTPTPTPTPTPTPTPTVTPQP). Residues 132–141 (TTCTGTVPTT) are compositionally biased toward low complexity. A linker ('hinge') (Pro-Thr box) region spans residues 139-168 (PTTSPTPTPTPTTPTPTPTPTPTPTPTVTP). The span at 142–167 (SPTPTPTPTTPTPTPTPTPTPTPTVT) shows a compositional bias: pro residues. Asp-247 is an active-site residue. Cystine bridges form between Cys-248–Cys-291 and Cys-390–Cys-426. The active-site Proton donor is the Asp-283. Asp-423 serves as the catalytic Nucleophile. Residues 438 to 449 (EIALEMARNARW) are catalytic.

It belongs to the glycosyl hydrolase 6 (cellulase B) family. The linker region (also termed 'hinge') may be a potential site for proteolysis. Post-translationally, predicted to be exported by the Tat system. The position of the signal peptide cleavage has not been experimentally proven.

It catalyses the reaction Endohydrolysis of (1-&gt;4)-beta-D-glucosidic linkages in cellulose, lichenin and cereal beta-D-glucans.. In terms of biological role, the biological conversion of cellulose to glucose generally requires three types of hydrolytic enzymes: (1) Endoglucanases which cut internal beta-1,4-glucosidic bonds; (2) Exocellobiohydrolases that cut the disaccharide cellobiose from the non-reducing end of the cellulose polymer chain; (3) Beta-1,4-glucosidases which hydrolyze the cellobiose and other short cello-oligosaccharides to glucose. This Cellulomonas fimi protein is Endoglucanase A (cenA).